Consider the following 107-residue polypeptide: Homeobox protein HD-7 (107 aa).

The homeobox DNA-binding region spans 21 to 80; the sequence is KPGEKVRKSEFQKEVLKKVYQATPYPTWENKIDIGILISLSPRAVDIWFQNKRHINKGKN.

It localises to the nucleus. This is Homeobox protein HD-7 (HD-7) from Encephalitozoon cuniculi (strain GB-M1) (Microsporidian parasite).